Here is a 512-residue protein sequence, read N- to C-terminus: MIKDMIDSIEQFAQTQADFPVYDCLGERRTYGQLKRDSDSIAALIDSLALLAKSPVLVFGAQTYDMLATFVALTKSGHAYIPVDVHSAPERILAIIEIAKPSLIIAIEEFPLTIEGISLVSLSEIESAKLAEMPYERTHSVKGDDNYYIIFTSGTTGQPKGVQISHDNLLSFTNWMIEDAAFDVPKQPQMLAQPPYSFDLSVMYWAPTLALGGTLFALPKELVADFKQLFTTIAQLPVGIWTSTPSFADMAMLSDDFCQAKMPALTHFYFDGEELTVSTARKLFERFPSAKIINAYGPTEATVALSAIEITREMVDNYTRLPIGYPKPDSPTYIIDEDGKELSSGEQGEIIVTGPAVSKGYLNNPEKTAEAFFTFKGQPAYHTGDIGSLTEDNILLYGGRLDFQIKYAGYRIELEDVSQQLNQSPMVASAVAVPRYNKEHKVQNLLAYIVVKDGVKERFDRELELTKAIKASVKDHMMSYMMPSKFLYRDSLPLTPNGKIDIKTLINEVNNR.

Thr-152–Ser-153 provides a ligand contact to ATP. Asp-199 lines the D-alanine pocket. Asn-294–Thr-299 provides a ligand contact to ATP. Val-303 contributes to the D-alanine binding site. ATP-binding positions include Asp-385, Tyr-397–Arg-400, and Lys-499. Position 499 (Lys-499) interacts with D-alanine.

Belongs to the ATP-dependent AMP-binding enzyme family. DltA subfamily.

The protein localises to the cytoplasm. The enzyme catalyses holo-[D-alanyl-carrier protein] + D-alanine + ATP = D-alanyl-[D-alanyl-carrier protein] + AMP + diphosphate. Its pathway is cell wall biogenesis; lipoteichoic acid biosynthesis. Its function is as follows. Catalyzes the first step in the D-alanylation of lipoteichoic acid (LTA), the activation of D-alanine and its transfer onto the D-alanyl carrier protein (Dcp) DltC. In an ATP-dependent two-step reaction, forms a high energy D-alanyl-AMP intermediate, followed by transfer of the D-alanyl residue as a thiol ester to the phosphopantheinyl prosthetic group of the Dcp. D-alanylation of LTA plays an important role in modulating the properties of the cell wall in Gram-positive bacteria, influencing the net charge of the cell wall. This Streptococcus pyogenes serotype M3 (strain SSI-1) protein is D-alanine--D-alanyl carrier protein ligase.